Here is a 93-residue protein sequence, read N- to C-terminus: Zinc metalloproteinase-disintegrin-like leucurogin (93 aa).

A Disintegrin domain is found at 8 to 93; the sequence is PPVCGNELLE…SECPADVGHK (86 aa). Ca(2+) contacts are provided by valine 10, asparagine 13, leucine 15, glutamate 17, glutamate 20, and aspartate 23. Cystine bridges form between cysteine 11–cysteine 40, cysteine 22–cysteine 35, cysteine 24–cysteine 30, cysteine 34–cysteine 57, cysteine 48–cysteine 54, cysteine 53–cysteine 79, and cysteine 66–cysteine 86. Residues 72 to 74 carry the D/ECD-tripeptide motif; sequence ECD. Residues aspartate 74, proline 75, glutamate 77, aspartate 89, and valine 90 each contribute to the Ca(2+) site. A disordered region spans residues 74–93; it reads DPAEHCTGQSSECPADVGHK.

This sequence belongs to the venom metalloproteinase (M12B) family. P-III subfamily. As to quaternary structure, monomer. Zn(2+) is required as a cofactor. N-glycosylated. As to expression, expressed by the venom gland.

The protein localises to the secreted. Snake venom zinc metalloprotease that possesses hemorrhagic activity. The disintegrin-like domain has been expressed and named leucurogin. This recombinant disintegrin is able to inhibit collagen-induced platelet aggregation but not ADP- or arachidonic acid-induced platelet aggregation. Furthermore, it inhibits the adhesion of human fibroblasts to collagen type I. It also reduces adhesion and migration of human fibroblasts and inhibits migration and proliferation of human and mouse melanoma cell lines (BLM, and B16-F10-Nex2). In vitro, it inhibits the vascular structures formation by endothelial cells. In addition, it inhibits the growth of experimental Ehrlich tumor and has anti-angiogenesis effect on the sponge implant model. In vivo, when intraperitoneally injected into mice, it inhibits lung metastasis of B16F10 Nex-2 cells. In the treatment of human melanoma, grafted intradermally in the nude mice flank, it inhibits tumor growth. This chain is Zinc metalloproteinase-disintegrin-like leucurogin, found in Bothrops leucurus (Whitetail lancehead).